A 258-amino-acid chain; its full sequence is Global transcriptional regulator CodY (258 aa).

The interval 1–156 is GAF domain; it reads MSSLLTKTRM…SATIVGMEML (156 aa). The segment at residues 204 to 223 is a DNA-binding region (H-T-H motif); sequence ASKIADKVGITRSVIVNALR.

This sequence belongs to the CodY family.

The protein resides in the cytoplasm. Functionally, DNA-binding global transcriptional regulator which is involved in the adaptive response to starvation and acts by directly or indirectly controlling the expression of numerous genes in response to nutrient availability. During rapid exponential growth, CodY is highly active and represses genes whose products allow adaptation to nutrient depletion. This chain is Global transcriptional regulator CodY, found in Clostridium beijerinckii (strain ATCC 51743 / NCIMB 8052) (Clostridium acetobutylicum).